Consider the following 74-residue polypeptide: Sec-independent protein translocase protein TatA (74 aa).

Residues 1-21 traverse the membrane as a helical segment; the sequence is MGGISIWQLLIIVAIIVLLFG. Positions 51-74 are disordered; sequence ANFDKVEAKESTSTTEKTKEKEQA.

The protein belongs to the TatA/E family. In terms of assembly, the Tat system comprises two distinct complexes: a TatABC complex, containing multiple copies of TatA, TatB and TatC subunits, and a separate TatA complex, containing only TatA subunits. Substrates initially bind to the TatABC complex, which probably triggers association of the separate TatA complex to form the active translocon.

It localises to the cell inner membrane. Part of the twin-arginine translocation (Tat) system that transports large folded proteins containing a characteristic twin-arginine motif in their signal peptide across membranes. TatA could form the protein-conducting channel of the Tat system. This chain is Sec-independent protein translocase protein TatA, found in Haemophilus ducreyi (strain 35000HP / ATCC 700724).